Consider the following 354-residue polypeptide: Selection and upkeep of intraepithelial T-cells protein 1 (354 aa).

The 119-residue stretch at 23 to 141 folds into the Ig-like V-type 1 domain; the sequence is PSSEQFTVNS…EEAIAEVKVT (119 aa). Intrachain disulfides connect Cys-49–Cys-123 and Cys-163–Cys-217. The Ig-like C1-type 2 domain maps to 161 to 233; it reads VECNSEGWFP…TGQEERTSIV (73 aa). 3 helical membrane passes run 243–263, 283–303, and 326–346; these read SVWI…IMMP, LIGI…TITL, and MTVM…LVYF.

This sequence belongs to the SKINT family. As to expression, expressed in the thymus and skin.

The protein resides in the membrane. May act by engaging a cell surface molecule on immature T-cells in the embryonic thymus. The chain is Selection and upkeep of intraepithelial T-cells protein 1 (SKINT1) from Macaca fascicularis (Crab-eating macaque).